Reading from the N-terminus, the 471-residue chain is Heparan-sulfate 6-O-sulfotransferase 3 (471 aa).

Over 1 to 4 (MDER) the chain is Cytoplasmic. A helical; Signal-anchor for type II membrane protein membrane pass occupies residues 5–27 (FNKWLLTPVLTLLFVVIMYQYVS). The Lumenal portion of the chain corresponds to 28–471 (PSCTSSCTNF…EDYNSQVVRW (444 aa)). The disordered stretch occupies residues 39–122 (EQPRAGEAGP…EAPENGSLPR (84 aa)). A compositionally biased stretch (low complexity) spans 41 to 62 (PRAGEAGPPAVPGPARRAQAPP). Residues 70-81 (QLPPPPRGPPEG) show a composition bias toward pro residues. Residues 88–114 (PEEEDEEPGDPREGEEEEEEDEPDPEA) are compositionally biased toward acidic residues. N-linked (GlcNAc...) asparagine glycosylation is found at Asn-117 and Asn-128. 152 to 160 (HIQKTGGTT) contributes to the 3'-phosphoadenylyl sulfate binding site. Substrate is bound by residues 182 to 183 (KK), Arg-199, Trp-204, and His-209. His-209 acts as the Proton acceptor in catalysis. Asn-231 carries N-linked (GlcNAc...) asparagine glycosylation. 3'-phosphoadenylyl sulfate contacts are provided by Arg-245 and Ser-253. Residues His-257 and Trp-264 each coordinate substrate. Residues Asn-324 and Asn-329 are each glycosylated (N-linked (GlcNAc...) asparagine). Residue 377–379 (TQF) coordinates 3'-phosphoadenylyl sulfate. An N-linked (GlcNAc...) asparagine glycan is attached at Asn-380. Residue 383–384 (RA) participates in 3'-phosphoadenylyl sulfate binding. The tract at residues 422–471 (TKQLEHQRDRQKRREERRLQREHRDHQWPKEDGAAEGTVTEDYNSQVVRW) is disordered. Positions 423-454 (KQLEHQRDRQKRREERRLQREHRDHQWPKEDG) are enriched in basic and acidic residues. Positions 462–471 (EDYNSQVVRW) are enriched in polar residues.

Belongs to the sulfotransferase 6 family.

The protein resides in the membrane. The catalysed reaction is alpha-D-glucosaminyl-[heparan sulfate](n) + 3'-phosphoadenylyl sulfate = 6-sulfo-alpha-D-glucosaminyl-[heparan sulfate](n) + adenosine 3',5'-bisphosphate + H(+). In terms of biological role, 6-O-sulfation enzyme which catalyzes the transfer of sulfate from 3'-phosphoadenosine 5'-phosphosulfate (PAPS) to position 6 of the N-sulfoglucosamine residue (GlcNS) of heparan sulfate. This is Heparan-sulfate 6-O-sulfotransferase 3 (HS6ST3) from Homo sapiens (Human).